The following is a 1227-amino-acid chain: DNA-directed RNA polymerase subunit beta (1227 aa).

The protein belongs to the RNA polymerase beta chain family. The RNAP catalytic core consists of 2 alpha, 1 beta, 1 beta' and 1 omega subunit. When a sigma factor is associated with the core the holoenzyme is formed, which can initiate transcription.

The catalysed reaction is RNA(n) + a ribonucleoside 5'-triphosphate = RNA(n+1) + diphosphate. DNA-dependent RNA polymerase catalyzes the transcription of DNA into RNA using the four ribonucleoside triphosphates as substrates. This chain is DNA-directed RNA polymerase subunit beta, found in Chloroflexus aurantiacus (strain ATCC 29366 / DSM 635 / J-10-fl).